The sequence spans 242 residues: Biosynthetic peptidoglycan transglycosylase (242 aa).

Residues 19 to 39 (ILAALAVFWGGGIALFSVVPV) form a helical membrane-spanning segment.

This sequence belongs to the glycosyltransferase 51 family.

The protein localises to the cell inner membrane. The enzyme catalyses [GlcNAc-(1-&gt;4)-Mur2Ac(oyl-L-Ala-gamma-D-Glu-L-Lys-D-Ala-D-Ala)](n)-di-trans,octa-cis-undecaprenyl diphosphate + beta-D-GlcNAc-(1-&gt;4)-Mur2Ac(oyl-L-Ala-gamma-D-Glu-L-Lys-D-Ala-D-Ala)-di-trans,octa-cis-undecaprenyl diphosphate = [GlcNAc-(1-&gt;4)-Mur2Ac(oyl-L-Ala-gamma-D-Glu-L-Lys-D-Ala-D-Ala)](n+1)-di-trans,octa-cis-undecaprenyl diphosphate + di-trans,octa-cis-undecaprenyl diphosphate + H(+). The protein operates within cell wall biogenesis; peptidoglycan biosynthesis. In terms of biological role, peptidoglycan polymerase that catalyzes glycan chain elongation from lipid-linked precursors. In Salmonella schwarzengrund (strain CVM19633), this protein is Biosynthetic peptidoglycan transglycosylase.